The chain runs to 865 residues: Xylosyltransferase 2 (865 aa).

The Cytoplasmic segment spans residues 1–15 (MVASARVQKLVRRYK). The chain crosses the membrane as a helical; Signal-anchor for type II membrane protein span at residues 16–36 (LAIATALAILLLQGLVVWSFS). Over 37–865 (GLEEDEPGEK…GPVKADGRLR (829 aa)) the chain is Lumenal. The tract at residues 39–155 (EEDEPGEKGR…SVEGAPQPTD (117 aa)) is disordered. Residues 53–65 (RPLDPGEGSKDTD) show a composition bias toward basic and acidic residues. Basic residues predominate over residues 73-82 (SAGRRHGRWR). N-linked (GlcNAc...) asparagine glycosylation occurs at Asn122. 4 disulfides stabilise this stretch: Cys162-Cys190, Cys206-Cys448, Cys467-Cys480, and Cys469-Cys478. Residues Val239, Asp267, and 296-298 (TIW) contribute to the UDP-alpha-D-xylose site. Residue Asn327 is glycosylated (N-linked (GlcNAc...) asparagine). Residue 400-401 (DW) coordinates UDP-alpha-D-xylose. Residues Ser481 and 504–505 (RK) contribute to the UDP-alpha-D-xylose site. 2 cysteine pairs are disulfide-bonded: Cys581–Cys833 and Cys826–Cys839. Asn683 carries N-linked (GlcNAc...) asparagine glycosylation.

This sequence belongs to the glycosyltransferase 14 family. XylT subfamily. Monomer. Mg(2+) serves as cofactor. Requires Mn(2+) as cofactor. Contains disulfide bonds. In terms of tissue distribution, detected in brain, liver, lung, kidney, heart, spleen and testis, and at lower levels in skeletal muscle.

The protein localises to the golgi apparatus membrane. It localises to the secreted. It carries out the reaction UDP-alpha-D-xylose + L-seryl-[protein] = 3-O-(beta-D-xylosyl)-L-seryl-[protein] + UDP + H(+). It participates in glycan metabolism; chondroitin sulfate biosynthesis. It functions in the pathway glycan metabolism; heparan sulfate biosynthesis. In terms of biological role, catalyzes the first step in the biosynthesis of chondroitin sulfate, heparan sulfate and dermatan sulfate proteoglycans, such as DCN. Transfers D-xylose from UDP-D-xylose to specific serine residues of the core protein. This chain is Xylosyltransferase 2 (Xylt2), found in Mus musculus (Mouse).